Here is a 189-residue protein sequence, read N- to C-terminus: Probable nicotinate-nucleotide adenylyltransferase (189 aa).

It belongs to the NadD family.

It catalyses the reaction nicotinate beta-D-ribonucleotide + ATP + H(+) = deamido-NAD(+) + diphosphate. It functions in the pathway cofactor biosynthesis; NAD(+) biosynthesis; deamido-NAD(+) from nicotinate D-ribonucleotide: step 1/1. Functionally, catalyzes the reversible adenylation of nicotinate mononucleotide (NaMN) to nicotinic acid adenine dinucleotide (NaAD). This is Probable nicotinate-nucleotide adenylyltransferase from Ruegeria sp. (strain TM1040) (Silicibacter sp.).